The primary structure comprises 178 residues: ATP synthase subunit delta (178 aa).

The protein belongs to the ATPase delta chain family. F-type ATPases have 2 components, F(1) - the catalytic core - and F(0) - the membrane proton channel. F(1) has five subunits: alpha(3), beta(3), gamma(1), delta(1), epsilon(1). F(0) has three main subunits: a(1), b(2) and c(10-14). The alpha and beta chains form an alternating ring which encloses part of the gamma chain. F(1) is attached to F(0) by a central stalk formed by the gamma and epsilon chains, while a peripheral stalk is formed by the delta and b chains.

Its subcellular location is the cell inner membrane. F(1)F(0) ATP synthase produces ATP from ADP in the presence of a proton or sodium gradient. F-type ATPases consist of two structural domains, F(1) containing the extramembraneous catalytic core and F(0) containing the membrane proton channel, linked together by a central stalk and a peripheral stalk. During catalysis, ATP synthesis in the catalytic domain of F(1) is coupled via a rotary mechanism of the central stalk subunits to proton translocation. Its function is as follows. This protein is part of the stalk that links CF(0) to CF(1). It either transmits conformational changes from CF(0) to CF(1) or is implicated in proton conduction. This Stutzerimonas stutzeri (strain A1501) (Pseudomonas stutzeri) protein is ATP synthase subunit delta.